Reading from the N-terminus, the 369-residue chain is Transcription factor GTE6 (369 aa).

Residues 89-198 (KRMQDLMRQF…EKFEEKWAHF (110 aa)) enclose the Bromo domain. Positions 201-263 (KVQEEEKIRE…VERCRKITIE (63 aa)) form a coiled coil. Residues 250-331 (MRKVVERCRK…DALDNAMKKK (82 aa)) enclose the NET domain. Residues 329–348 (KKKKEEETKTRELSGAQKKE) are compositionally biased toward basic and acidic residues. A disordered region spans residues 329-369 (KKKKEEETKTRELSGAQKKEVSKKRNATTKLAERKTKRSRI). The short motif at 351 to 368 (KKRNATTKLAERKTKRSR) is the Bipartite nuclear localization signal element.

Abundantly expressed in flowers. Weakly expressed in roots, leaves and siliques; and undetectable in 5-day-old seedlings. In the basal rosette leaves of 21-day-old plants, it is more abundant in leaves 6 and 7, which possess narrow elliptical laminae, than in leaves 1-4, which have round laminae, suggesting a possible correlation between its expression and the formation of elliptical leaf laminae in mature leaves.

It localises to the nucleus. In terms of biological role, regulates differences in leaf patterning between juvenile and mature leaves by controlling differences in the development of primordia produced during juvenile and mature phases. Acts by activating transcription of the myb-domain protein AS1, a gene involved in leaf-axis specification. Associates with the promoter and the start of the transcribed region of AS1 and up-regulates expression of AS1 through acetylation of histones H3 and H4. In Arabidopsis thaliana (Mouse-ear cress), this protein is Transcription factor GTE6 (GTE6).